A 130-amino-acid chain; its full sequence is Small ribosomal subunit protein uS9 (130 aa).

A disordered region spans residues Arg109–Arg130.

It belongs to the universal ribosomal protein uS9 family.

The sequence is that of Small ribosomal subunit protein uS9 from Oleidesulfovibrio alaskensis (strain ATCC BAA-1058 / DSM 17464 / G20) (Desulfovibrio alaskensis).